Reading from the N-terminus, the 549-residue chain is Cytochrome bc1 complex cytochrome b subunit (549 aa).

A helical membrane pass occupies residues 45–65; it reads FLLGEIALYSFVVLLITGVYL. Residues His114 and His128 each coordinate heme. Transmembrane regions (helical) follow at residues 118 to 138, 146 to 166, and 189 to 209; these read ALMF…TGAF, WVIG…GYSL, and VIGT…TILI. The heme site is built by His216 and His231. The next 5 membrane-spanning stretches (helical) occupy residues 217-237, 266-286, 335-355, 381-401, and 418-438; these read ILLL…LVWF, SGAF…LLQI, PVWV…YPFL, IGAM…NDII, and IGMV…CIGL.

It belongs to the cytochrome b family. As to quaternary structure, the cytochrome bc1 complex is composed of a cytochrome b (QcrB), the Rieske iron-sulfur protein (QcrA) and a diheme cytochrome c (QcrC) subunit. Heme is required as a cofactor.

It is found in the cell membrane. It catalyses the reaction a quinol + 2 Fe(III)-[cytochrome c](out) = a quinone + 2 Fe(II)-[cytochrome c](out) + 2 H(+)(out). Cytochrome b subunit of the cytochrome bc1 complex, an essential component of the respiratory electron transport chain required for ATP synthesis. The bc1 complex catalyzes the oxidation of ubiquinol and the reduction of cytochrome c in the respiratory chain. The bc1 complex operates through a Q-cycle mechanism that couples electron transfer to generation of the proton gradient that drives ATP synthesis. The cytochrome b subunit contains two ubiquinol reactive sites: the oxidation (QP) site and the reduction (QN) site. This is Cytochrome bc1 complex cytochrome b subunit (qcrB) from Mycobacterium bovis (strain ATCC BAA-935 / AF2122/97).